The chain runs to 193 residues: Lipopolysaccharide core heptose(II)-phosphate phosphatase (193 aa).

The N-terminal stretch at 1 to 25 (MKLKKHVAVLLISFLCLIGLVTQHA) is a signal peptide.

The protein belongs to the phosphoglycerate mutase family. Ais subfamily.

Its subcellular location is the periplasm. The protein operates within bacterial outer membrane biogenesis; lipopolysaccharide metabolism. In terms of biological role, catalyzes the dephosphorylation of heptose(II) of the outer membrane lipopolysaccharide core. The sequence is that of Lipopolysaccharide core heptose(II)-phosphate phosphatase from Escherichia fergusonii (strain ATCC 35469 / DSM 13698 / CCUG 18766 / IAM 14443 / JCM 21226 / LMG 7866 / NBRC 102419 / NCTC 12128 / CDC 0568-73).